Here is a 573-residue protein sequence, read N- to C-terminus: MTLSDFEKQRQENIQRNKELLRQLELDSLNDSISREVPKPKPKAKRRKTENARVKTEPIMPSRRSRRLAGSTMEDSEEDKQMREEMEKAEERKRELEKLKSTRLFGDFKLIDLVVNKQGEFKNQDKILKAKEKDNEIKKEEKEEIKKEEDSTDSIDLSRDNEVLQKLQQLGDRFSAGDFYEMIKDTKSKYDDTVLQEKREEFDRVKLYERFDPLDIKITQQRITSIAFHPAKDDRVVVAGDTTGYVGIWAVDAKGDDETSPHITILKPHGKAVARILTPEQQPSSILTCSYDGSVRRLDLKRLESTEVAYLQDPYESSDYPLGVSDINVADNNLLYMTTLSGNFYRYDMRSPFKQGELLRLHDKKIGSFSINPNAFHQIATASLDRTMKLWDLRNISQKNSYWSEFDDKSPHLYCTYHSRLSVSCVDWNHDNHLVCNGYDDTVNVFDLSGSDKLPLVTEWSKDYETEKKKRTTIEDGVPEKLEALTRIKHNCQTGRWVSILKSKWQLHPADGLQKFVIANMNRAFDIYDQKGRILCHLTDPDRMTAVPAVSMLHPTENWCVGGSASGKVYLFE.

The interval 27-94 (DSLNDSISRE…EMEKAEERKR (68 aa)) is disordered. Residues 72-152 (TMEDSEEDKQ…EEIKKEEDST (81 aa)) are a coiled coil. The segment covering 79 to 94 (DKQMREEMEKAEERKR) has biased composition (basic and acidic residues). WD repeat units lie at residues 218-259 (ITQQ…DDET), 268-308 (PHGK…STEV), 319-357 (DYPL…KQGE), 361-401 (LHDK…QKNS), 418-456 (HSRL…KLPL), 495-538 (GRWV…LCHL), and 542-573 (DRMT…YLFE).

The protein belongs to the WD repeat DDB2/WDR76 family.

Its function is as follows. DNA-binding protein that binds to both single- and double-stranded DNA. Binds preferentially to UV-damaged DNA. May be involved in DNA-metabolic processes. This Meyerozyma guilliermondii (strain ATCC 6260 / CBS 566 / DSM 6381 / JCM 1539 / NBRC 10279 / NRRL Y-324) (Yeast) protein is DNA damage-binding protein CMR1.